Consider the following 201-residue polypeptide: Small ribosomal subunit protein uS4c (201 aa).

The segment at 20-44 (GLTSKRPTVGSELRNQSRSTKKSQY) is disordered. The S4 RNA-binding domain maps to 89–150 (MRLDNILFRL…NKKSKTLIQN (62 aa)).

Belongs to the universal ribosomal protein uS4 family. In terms of assembly, part of the 30S ribosomal subunit. Contacts protein S5. The interaction surface between S4 and S5 is involved in control of translational fidelity.

The protein localises to the plastid. It is found in the chloroplast. In terms of biological role, one of the primary rRNA binding proteins, it binds directly to 16S rRNA where it nucleates assembly of the body of the 30S subunit. Functionally, with S5 and S12 plays an important role in translational accuracy. This is Small ribosomal subunit protein uS4c (rps4) from Lotus japonicus (Lotus corniculatus var. japonicus).